The primary structure comprises 330 residues: 6-phosphogluconolactonase (330 aa).

The protein belongs to the cycloisomerase 2 family.

It carries out the reaction 6-phospho-D-glucono-1,5-lactone + H2O = 6-phospho-D-gluconate + H(+). The protein operates within carbohydrate degradation; pentose phosphate pathway; D-ribulose 5-phosphate from D-glucose 6-phosphate (oxidative stage): step 2/3. In terms of biological role, catalyzes the hydrolysis of 6-phosphogluconolactone to 6-phosphogluconate. The chain is 6-phosphogluconolactonase from Erwinia tasmaniensis (strain DSM 17950 / CFBP 7177 / CIP 109463 / NCPPB 4357 / Et1/99).